The sequence spans 503 residues: Probable cytosol aminopeptidase (503 aa).

2 residues coordinate Mn(2+): Lys-270 and Asp-275. Lys-282 is a catalytic residue. The Mn(2+) site is built by Asp-293, Asp-352, and Glu-354. Arg-356 is an active-site residue.

It belongs to the peptidase M17 family. Mn(2+) serves as cofactor.

Its subcellular location is the cytoplasm. The catalysed reaction is Release of an N-terminal amino acid, Xaa-|-Yaa-, in which Xaa is preferably Leu, but may be other amino acids including Pro although not Arg or Lys, and Yaa may be Pro. Amino acid amides and methyl esters are also readily hydrolyzed, but rates on arylamides are exceedingly low.. The enzyme catalyses Release of an N-terminal amino acid, preferentially leucine, but not glutamic or aspartic acids.. Presumably involved in the processing and regular turnover of intracellular proteins. Catalyzes the removal of unsubstituted N-terminal amino acids from various peptides. The polypeptide is Probable cytosol aminopeptidase (Shigella boydii serotype 18 (strain CDC 3083-94 / BS512)).